Here is a 269-residue protein sequence, read N- to C-terminus: Formamidopyrimidine-DNA glycosylase (269 aa).

Residue proline 2 is the Schiff-base intermediate with DNA of the active site. The active-site Proton donor is glutamate 3. Residue lysine 57 is the Proton donor; for beta-elimination activity of the active site. Residues histidine 90, arginine 109, and lysine 150 each contribute to the DNA site. The FPG-type zinc finger occupies phenylalanine 235–tyrosine 269. Arginine 259 (proton donor; for delta-elimination activity) is an active-site residue.

Belongs to the FPG family. Monomer. Requires Zn(2+) as cofactor.

It carries out the reaction Hydrolysis of DNA containing ring-opened 7-methylguanine residues, releasing 2,6-diamino-4-hydroxy-5-(N-methyl)formamidopyrimidine.. The catalysed reaction is 2'-deoxyribonucleotide-(2'-deoxyribose 5'-phosphate)-2'-deoxyribonucleotide-DNA = a 3'-end 2'-deoxyribonucleotide-(2,3-dehydro-2,3-deoxyribose 5'-phosphate)-DNA + a 5'-end 5'-phospho-2'-deoxyribonucleoside-DNA + H(+). Functionally, involved in base excision repair of DNA damaged by oxidation or by mutagenic agents. Acts as a DNA glycosylase that recognizes and removes damaged bases. Has a preference for oxidized purines, such as 7,8-dihydro-8-oxoguanine (8-oxoG). Has AP (apurinic/apyrimidinic) lyase activity and introduces nicks in the DNA strand. Cleaves the DNA backbone by beta-delta elimination to generate a single-strand break at the site of the removed base with both 3'- and 5'-phosphates. The polypeptide is Formamidopyrimidine-DNA glycosylase (Photorhabdus laumondii subsp. laumondii (strain DSM 15139 / CIP 105565 / TT01) (Photorhabdus luminescens subsp. laumondii)).